A 1060-amino-acid polypeptide reads, in one-letter code: MPKRQDIHKILVIGSGPIIIGQAAEFDYSGTQACLALREEGYEVVLVNSNPATIMTDTEIADRVYIEPLTVEFVSQILRKELPDAILPTIGGQIGLNLAMKLSNTGILDELGIELLGTKLTAIDQAEDRELFKNLMQKLHEPVPESAIANNIEEAQQFADKIGFPVIIRPAFTMGGTGGGIANNEKELAEIAENGLNLSPVTQVLVERSIAGYKEVEFEVMRDAADSAIVVCNMENFDPVGVHTGDSMVFAPTQTLTDKEVQMLRDAALKIIRALKIEGGCNVQFALDRNSFKYYVIEVNPRVSRSSALASKATGYPIAKMAAKIAVGLHLDEIKNPVTKKTWAEFEPALDYVVTKLPRFPFDKFENGDRTLGTQMKATGEVMAIGRTLEESLLKAVRSLEVGLIHPERPAFAKLSDDELSKQIIQANDERLFYLAEAFRRDYTIEEVAELSKMNPFFLDKIKHIVELERELAAHKADLGLLAEVKRYGFADEEIAKLWGLHADQVRQMRKEQKILPVYKMVDTCAGEFASDTPYYYSTYESSTESVKSDKPSVLVIGSGPIRIGQGVEFDYATVHSVKAIQKAGYEAIIMNSNPETVSTDFSIADKLYFEPLTLEDVLNVIDLEQPEGVIVQFGGQTAINLAEPLANRGIKILGTSVEDLNRAEDRDLFDQVIKSLKLPQPEGGTATDKAGALAVADKIGYPVLVRPSYVLGGRAMEIVHDATELDNYIDRAVSVSHDHPVLIDHYLVGKECEVDCISDGDTVVLPGIMEHIERAGIHSGDSMAVYPPQTFSQDIIDQITDATIKLSRTLNCIGLMNVQFIIHDGKAYVIEVNPRASRTVPFLSKVTNIKLAQVATLAILGLSLKEQGFETGLLPNQSGIHVKSPVFSFSKLNHVDSLLGPEMKSTGEVMGSDTTLAKALYKAFEAAGMHLPQFGRALITVKDADKAEATALAKRFREVGYQLVATSGTAKAFEKAGITVSTIEKLDSGQETILEDIANRKIQLVINTMSADKKVSSDGFRIREAAIEHGVPLMTSLDTAGAILKVLELQAFSISPIKS.

A carboxyphosphate synthetic domain region spans residues 1-401 (MPKRQDIHKI…SLLKAVRSLE (401 aa)). ATP contacts are provided by Arg129, Arg169, Gly175, Gly176, Arg208, Ile210, Glu215, Gly241, Val242, His243, Gln284, and Glu298. Residues 133 to 327 (KNLMQKLHEP…IAKMAAKIAV (195 aa)) enclose the ATP-grasp 1 domain. The Mg(2+) site is built by Gln284, Glu298, and Asn300. Residues Gln284, Glu298, and Asn300 each coordinate Mn(2+). Residues 402–546 (VGLIHPERPA…YSTYESSTES (145 aa)) are oligomerization domain. The tract at residues 547-929 (VKSDKPSVLV…ALYKAFEAAG (383 aa)) is carbamoyl phosphate synthetic domain. Residues 671-861 (DQVIKSLKLP…LAQVATLAIL (191 aa)) enclose the ATP-grasp 2 domain. ATP contacts are provided by Arg707, His746, Leu748, Glu752, Gly777, Ile778, His779, Ser780, Gln820, and Glu832. 3 residues coordinate Mg(2+): Gln820, Glu832, and Asn834. Residues Gln820, Glu832, and Asn834 each contribute to the Mn(2+) site. An MGS-like domain is found at 930–1060 (MHLPQFGRAL…QAFSISPIKS (131 aa)). An allosteric domain region spans residues 930–1060 (MHLPQFGRAL…QAFSISPIKS (131 aa)).

Belongs to the CarB family. In terms of assembly, composed of two chains; the small (or glutamine) chain promotes the hydrolysis of glutamine to ammonia, which is used by the large (or ammonia) chain to synthesize carbamoyl phosphate. Tetramer of heterodimers (alpha,beta)4. The cofactor is Mg(2+). Mn(2+) serves as cofactor.

It carries out the reaction hydrogencarbonate + L-glutamine + 2 ATP + H2O = carbamoyl phosphate + L-glutamate + 2 ADP + phosphate + 2 H(+). The catalysed reaction is hydrogencarbonate + NH4(+) + 2 ATP = carbamoyl phosphate + 2 ADP + phosphate + 2 H(+). The protein operates within amino-acid biosynthesis; L-arginine biosynthesis; carbamoyl phosphate from bicarbonate: step 1/1. It functions in the pathway pyrimidine metabolism; UMP biosynthesis via de novo pathway; (S)-dihydroorotate from bicarbonate: step 1/3. Functionally, large subunit of the glutamine-dependent carbamoyl phosphate synthetase (CPSase). CPSase catalyzes the formation of carbamoyl phosphate from the ammonia moiety of glutamine, carbonate, and phosphate donated by ATP, constituting the first step of 2 biosynthetic pathways, one leading to arginine and/or urea and the other to pyrimidine nucleotides. The large subunit (synthetase) binds the substrates ammonia (free or transferred from glutamine from the small subunit), hydrogencarbonate and ATP and carries out an ATP-coupled ligase reaction, activating hydrogencarbonate by forming carboxy phosphate which reacts with ammonia to form carbamoyl phosphate. The sequence is that of Carbamoyl phosphate synthase large chain from Lacticaseibacillus casei (strain BL23) (Lactobacillus casei).